Here is a 475-residue protein sequence, read N- to C-terminus: Tubulin gamma chain (475 aa).

142 to 148 (AGGTGSG) serves as a coordination point for GTP. Positions 455–475 (GKQVSGEGNTSGTVDSRVGAS) are disordered.

It belongs to the tubulin family.

Its subcellular location is the cytoplasm. The protein resides in the cytoskeleton. It is found in the microtubule organizing center. Tubulin is the major constituent of microtubules. The gamma chain is found at microtubule organizing centers (MTOC) such as the spindle poles, suggesting that it is involved in the minus-end nucleation of microtubule assembly. The sequence is that of Tubulin gamma chain (TUBG1) from Physcomitrium patens (Spreading-leaved earth moss).